The primary structure comprises 440 residues: Histidinol dehydrogenase homolog 2 (440 aa).

H265 lines the Zn(2+) pocket. Active-site proton acceptor residues include E333 and H334. Residue H426 participates in Zn(2+) binding.

This sequence belongs to the histidinol dehydrogenase family. Zn(2+) is required as a cofactor.

This Mesorhizobium japonicum (strain LMG 29417 / CECT 9101 / MAFF 303099) (Mesorhizobium loti (strain MAFF 303099)) protein is Histidinol dehydrogenase homolog 2.